The following is a 1453-amino-acid chain: Clustered mitochondria protein homolog (1453 aa).

Residues 78-101 (LSENGQENSPHNSDSGHETSSPDS) are compositionally biased toward polar residues. The interval 78–110 (LSENGQENSPHNSDSGHETSSPDSPLTPIEEGA) is disordered. Positions 439-690 (EDGIRAEDCT…RTFPPDVNYL (252 aa)) constitute a Clu domain. Residues 979–1015 (PLTPSNEEVSMPINSVKKSRSSKRRKQISSGGKENDD) are disordered. Residues 995–1005 (KKSRSSKRRKQ) show a composition bias toward basic residues. TPR repeat units follow at residues 1235–1268 (AEID…HQIY) and 1277–1310 (ALIY…YSKT).

It belongs to the CLU family.

The protein resides in the cytoplasm. Its function is as follows. mRNA-binding protein involved in proper cytoplasmic distribution of mitochondria. This Brugia malayi (Filarial nematode worm) protein is Clustered mitochondria protein homolog.